The sequence spans 212 residues: Hemagglutinin 2 (212 aa).

The protein localises to the secreted. Its function is as follows. Induces agglutination of neuraminidase-treated erythrocytes. In Eikenella corrodens, this protein is Hemagglutinin 2 (hag2).